Consider the following 338-residue polypeptide: 1-aminocyclopropane-1-carboxylate deaminase (338 aa).

K51 carries the N6-(pyridoxal phosphate)lysine modification. S78 functions as the Nucleophile in the catalytic mechanism.

Belongs to the ACC deaminase/D-cysteine desulfhydrase family. Homotrimer. The cofactor is pyridoxal 5'-phosphate.

The enzyme catalyses 1-aminocyclopropane-1-carboxylate + H2O = 2-oxobutanoate + NH4(+). In terms of biological role, catalyzes a cyclopropane ring-opening reaction, the irreversible conversion of 1-aminocyclopropane-1-carboxylate (ACC) to ammonia and alpha-ketobutyrate. Allows growth on ACC as a nitrogen source. The sequence is that of 1-aminocyclopropane-1-carboxylate deaminase from Burkholderia multivorans (strain ATCC 17616 / 249).